Here is a 368-residue protein sequence, read N- to C-terminus: Peptide chain release factor 2 (368 aa).

Position 249 is an N5-methylglutamine (glutamine 249).

The protein belongs to the prokaryotic/mitochondrial release factor family. Methylated by PrmC. Methylation increases the termination efficiency of RF2.

Its subcellular location is the cytoplasm. Its function is as follows. Peptide chain release factor 2 directs the termination of translation in response to the peptide chain termination codons UGA and UAA. The chain is Peptide chain release factor 2 from Rhodococcus jostii (strain RHA1).